Consider the following 694-residue polypeptide: Beta-galactosidase (694 aa).

The tract at residues 1 to 31 (MGKRFPSGWFSPRVHPPRRQRSPMTNQATPG) is disordered. The segment covering 22 to 31 (SPMTNQATPG) has biased composition (polar residues). Substrate is bound by residues arginine 144 and asparagine 182. Catalysis depends on glutamate 183, which acts as the Proton donor. Catalysis depends on glutamate 341, which acts as the Nucleophile. Substrate-binding positions include tryptophan 349 and 389–392 (EKFH).

The protein belongs to the glycosyl hydrolase 42 family. In terms of assembly, homotrimer.

The catalysed reaction is Hydrolysis of terminal non-reducing beta-D-galactose residues in beta-D-galactosides.. With respect to regulation, strongly inhibited by glucose. No activity is lost during treatment with 100 mM EDTA after 2 hours. Activity not considerably affected by metal ions (5 mM), including Na(+), K(+), Mg(2+), Co(2+) and Ca(2+). Completely inhibited by Cu(2+) and Zn(2+) (5 mM) and is strongly inhibited by Mn(2+) (11%), Fe(2+) (25%) and Ni(2+) (38%) in comparison with the activity in the absence of cations (100%). Activity not affected by dithiothreitol, beta-mercaptoethanol and L-cysteine whereas reduced glutathione almost completely inactivates it. With ONPG as substrate, the addition of ethanol up to 20% still slightly stimulates activity. The activity increases up to 120% in the presence of 8% v/v ethanol at pH 5.5. In terms of biological role, hydrolyzes p-nitrophenyl-beta-D-galactopyranoside (PNPG), o-nitrophenyl-beta-D-galactopyranoside (ONPG) and chromogen 5-bromo-4-chloro-3-indolyl-beta-D-galactopyranoside (X-gal), with highest activity against PNPG. Also acts on p-nitrophenyl-beta-D-glucopyranoside (PNPGlu) and o-nitrophenyl-beta-D-glucopyranoside (ONPGlu), but with significantly lower activity. This is Beta-galactosidase from Arthrobacter sp.